The chain runs to 216 residues: Ribonuclease T (216 aa).

Residues valine 28–phenylalanine 202 enclose the Exonuclease domain. Mg(2+) is bound by residues aspartate 31, glutamate 33, histidine 189, and aspartate 194. The Proton donor/acceptor role is filled by histidine 189.

This sequence belongs to the RNase T family. As to quaternary structure, homodimer. The cofactor is Mg(2+).

Trims short 3' overhangs of a variety of RNA species, leaving a one or two nucleotide 3' overhang. Responsible for the end-turnover of tRNA: specifically removes the terminal AMP residue from uncharged tRNA (tRNA-C-C-A). Also appears to be involved in tRNA biosynthesis. The chain is Ribonuclease T from Xanthomonas campestris pv. campestris (strain 8004).